A 161-amino-acid polypeptide reads, in one-letter code: 2-C-methyl-D-erythritol 2,4-cyclodiphosphate synthase (161 aa).

Residues aspartate 11 and histidine 13 each coordinate a divalent metal cation. 4-CDP-2-C-methyl-D-erythritol 2-phosphate is bound by residues 11 to 13 (DIH) and 37 to 38 (HS). Histidine 45 provides a ligand contact to a divalent metal cation. 4-CDP-2-C-methyl-D-erythritol 2-phosphate contacts are provided by residues 59 to 61 (DIG), 135 to 138 (TTNE), and arginine 145.

The protein belongs to the IspF family. In terms of assembly, homotrimer. Requires a divalent metal cation as cofactor.

It catalyses the reaction 4-CDP-2-C-methyl-D-erythritol 2-phosphate = 2-C-methyl-D-erythritol 2,4-cyclic diphosphate + CMP. The protein operates within isoprenoid biosynthesis; isopentenyl diphosphate biosynthesis via DXP pathway; isopentenyl diphosphate from 1-deoxy-D-xylulose 5-phosphate: step 4/6. Functionally, involved in the biosynthesis of isopentenyl diphosphate (IPP) and dimethylallyl diphosphate (DMAPP), two major building blocks of isoprenoid compounds. Catalyzes the conversion of 4-diphosphocytidyl-2-C-methyl-D-erythritol 2-phosphate (CDP-ME2P) to 2-C-methyl-D-erythritol 2,4-cyclodiphosphate (ME-CPP) with a corresponding release of cytidine 5-monophosphate (CMP). This is 2-C-methyl-D-erythritol 2,4-cyclodiphosphate synthase from Synechocystis sp. (strain ATCC 27184 / PCC 6803 / Kazusa).